The following is a 249-amino-acid chain: Seipin homolog (249 aa).

Residues 1 to 10 (MGYLVKLFKL) are Cytoplasmic-facing. The helical transmembrane segment at 11 to 31 (VVWMLVIGLFSIPSLVSYVIF) threads the bilayer. Residues 32-212 (YDTVIPHSVI…GMRWFMYTHK (181 aa)) are Lumenal-facing. A helical membrane pass occupies residues 213–233 (VSAFLVFTSLFWFTGITSTII). Over 234–249 (TYLIVSSTSETKATRR) the chain is Cytoplasmic.

This sequence belongs to the seipin family.

It localises to the endoplasmic reticulum membrane. In terms of biological role, involved in lipid metabolism and lipid droplet (LD) morphology, number, and size. Facilitates initiation of LD formation, and ensures that vectorial budding of LDs from the ER is directed towards the cytoplasm. The chain is Seipin homolog from Schizosaccharomyces pombe (strain 972 / ATCC 24843) (Fission yeast).